A 668-amino-acid chain; its full sequence is Biosynthetic arginine decarboxylase (668 aa).

The residue at position 105 (lysine 105) is an N6-(pyridoxal phosphate)lysine. 286 to 296 (LDVGGGLGVDY) is a binding site for substrate.

The protein belongs to the Orn/Lys/Arg decarboxylase class-II family. SpeA subfamily. Mg(2+) is required as a cofactor. The cofactor is pyridoxal 5'-phosphate.

It catalyses the reaction L-arginine + H(+) = agmatine + CO2. In terms of biological role, catalyzes the biosynthesis of agmatine from arginine. The polypeptide is Biosynthetic arginine decarboxylase (Rhodopirellula baltica (strain DSM 10527 / NCIMB 13988 / SH1)).